Reading from the N-terminus, the 361-residue chain is POU domain, class 3, transcription factor 4 (361 aa).

Disordered stretches follow at residues 99–131 (PHVA…GQPL) and 144–192 (MLEH…PTSD). Polar residues predominate over residues 119 to 131 (APNSSITNSGQPL). Over residues 165–183 (VLREPPDHGELGSHHCQDH) the composition is skewed to basic and acidic residues. Residues 186-260 (EETPTSDELE…LLNKWLEEAD (75 aa)) enclose the POU-specific domain. Phosphoserine is present on S265. Positions 278-337 (KRKKRTSIEVSVKGVLETHFLKCPKPAAQEISSLADSLQLEKEVVRVWFCNRRQKEKRMT) form a DNA-binding region, homeobox. The segment at 334-361 (KRMTPPGDQQPHEVYSHTVKTDASCHDL) is disordered. Positions 343–361 (QPHEVYSHTVKTDASCHDL) are enriched in basic and acidic residues.

Belongs to the POU transcription factor family. Class-3 subfamily.

The protein resides in the nucleus. In terms of biological role, probable transcription factor which exert its primary action widely during early neural development and in a very limited set of neurons in the mature brain. The protein is POU domain, class 3, transcription factor 4 (Pou3f4) of Mesocricetus auratus (Golden hamster).